The chain runs to 153 residues: 17.3 kDa class I heat shock protein (153 aa).

A sHSP domain is found at 39 to 153 (ENSAFVSTRV…PDVKAIDISG (115 aa)).

It belongs to the small heat shock protein (HSP20) family. As to quaternary structure, forms oligomeric structures.

The protein resides in the cytoplasm. This chain is 17.3 kDa class I heat shock protein (HSP17.3-B), found in Glycine max (Soybean).